Reading from the N-terminus, the 512-residue chain is Cytochrome P450 1A2 (512 aa).

O-linked (GlcNAc) serine glycosylation occurs at Ser-65. Phe-222 lines the substrate pocket. Residue Cys-454 coordinates heme.

This sequence belongs to the cytochrome P450 family. Interacts with PGRMC1; the interaction requires PGRMC1 homodimerization. The cofactor is heme. As to expression, constitutively expressed in liver.

It is found in the endoplasmic reticulum membrane. The protein localises to the microsome membrane. It catalyses the reaction an organic molecule + reduced [NADPH--hemoprotein reductase] + O2 = an alcohol + oxidized [NADPH--hemoprotein reductase] + H2O + H(+). The enzyme catalyses 17beta-estradiol + reduced [NADPH--hemoprotein reductase] + O2 = 2-hydroxy-17beta-estradiol + oxidized [NADPH--hemoprotein reductase] + H2O + H(+). It carries out the reaction 17beta-estradiol + reduced [NADPH--hemoprotein reductase] + O2 = 4-hydroxy-17beta-estradiol + oxidized [NADPH--hemoprotein reductase] + H2O + H(+). The catalysed reaction is estrone + reduced [NADPH--hemoprotein reductase] + O2 = 2-hydroxyestrone + oxidized [NADPH--hemoprotein reductase] + H2O + H(+). It catalyses the reaction estrone + reduced [NADPH--hemoprotein reductase] + O2 = 4-hydroxyestrone + oxidized [NADPH--hemoprotein reductase] + H2O + H(+). The enzyme catalyses cholesterol + reduced [NADPH--hemoprotein reductase] + O2 = 25-hydroxycholesterol + oxidized [NADPH--hemoprotein reductase] + H2O + H(+). It carries out the reaction all-trans-retinol + reduced [NADPH--hemoprotein reductase] + O2 = all-trans-retinal + oxidized [NADPH--hemoprotein reductase] + 2 H2O + H(+). The catalysed reaction is all-trans-retinal + reduced [NADPH--hemoprotein reductase] + O2 = all-trans-retinoate + oxidized [NADPH--hemoprotein reductase] + H2O + 2 H(+). It catalyses the reaction (5Z,8Z,11Z,14Z)-eicosatetraenoate + reduced [NADPH--hemoprotein reductase] + O2 = (14R,15S)-epoxy-(5Z,8Z,11Z)-eicosatrienoate + oxidized [NADPH--hemoprotein reductase] + H2O + H(+). The enzyme catalyses (5Z,8Z,11Z,14Z)-eicosatetraenoate + reduced [NADPH--hemoprotein reductase] + O2 = (14S,15R)-epoxy-(5Z,8Z,11Z)-eicosatrienoate + oxidized [NADPH--hemoprotein reductase] + H2O + H(+). It carries out the reaction (5Z,8Z,11Z,14Z,17Z)-eicosapentaenoate + reduced [NADPH--hemoprotein reductase] + O2 = (17R,18S)-epoxy-(5Z,8Z,11Z,14Z)-eicosatetraenoate + oxidized [NADPH--hemoprotein reductase] + H2O + H(+). The catalysed reaction is (4Z,7Z,10Z,13Z,16Z,19Z)-docosahexaenoate + reduced [NADPH--hemoprotein reductase] + O2 = (19R,20S)-epoxy-(4Z,7Z,10Z,13Z,16Z)-docosapentaenoate + oxidized [NADPH--hemoprotein reductase] + H2O + H(+). It catalyses the reaction (5S)-hydroperoxy-(6E,8Z,11Z,14Z)-eicosatetraenoate = 5-oxo-(6E,8Z,11Z,14Z)-eicosatetraenoate + H2O. The enzyme catalyses (12S)-hydroperoxy-(5Z,8Z,10E,14Z)-eicosatetraenoate = 12-oxo-(5Z,8Z,10E,14Z)-eicosatetraenoate + H2O. It carries out the reaction (15S)-hydroperoxy-(5Z,8Z,11Z,13E)-eicosatetraenoate = 15-oxo-(5Z,8Z,11Z,13E)-eicosatetraenoate + H2O. The catalysed reaction is (13S)-hydroperoxy-(9Z,11E)-octadecadienoate = 13-oxo-(9Z,11E)-octadecadienoate + H2O. It catalyses the reaction (5Z,8Z,11Z,14Z)-eicosatetraenoate + reduced [NADPH--hemoprotein reductase] + O2 = 13-hydroxy-(5Z,8Z,11Z,14Z)-eicosatetraenoate + oxidized [NADPH--hemoprotein reductase] + H2O + H(+). The enzyme catalyses (5Z,8Z,11Z,14Z)-eicosatetraenoate + reduced [NADPH--hemoprotein reductase] + O2 = 19-hydroxy-(5Z,8Z,11Z,14Z)-eicosatetraenoate + oxidized [NADPH--hemoprotein reductase] + H2O + H(+). It carries out the reaction (9Z,12Z)-octadecadienoate + reduced [NADPH--hemoprotein reductase] + O2 = 11-hydroxy-(9Z,12Z)-octadecadienoate + oxidized [NADPH--hemoprotein reductase] + H2O + H(+). It participates in cofactor metabolism; retinol metabolism. Its pathway is steroid metabolism; cholesterol metabolism. It functions in the pathway lipid metabolism; arachidonate metabolism. In terms of biological role, a cytochrome P450 monooxygenase involved in the metabolism of various endogenous substrates, including fatty acids, steroid hormones and vitamins. Mechanistically, uses molecular oxygen inserting one oxygen atom into a substrate, and reducing the second into a water molecule, with two electrons provided by NADPH via cytochrome P450 reductase (NADPH--hemoprotein reductase). Catalyzes the hydroxylation of carbon-hydrogen bonds. Exhibits high catalytic activity for the formation of hydroxyestrogens from estrone (E1) and 17beta-estradiol (E2), namely 2-hydroxy E1 and E2. Metabolizes cholesterol toward 25-hydroxycholesterol, a physiological regulator of cellular cholesterol homeostasis. May act as a major enzyme for all-trans retinoic acid biosynthesis in the liver. Catalyzes two successive oxidative transformation of all-trans retinol to all-trans retinal and then to the active form all-trans retinoic acid. Primarily catalyzes stereoselective epoxidation of the last double bond of polyunsaturated fatty acids (PUFA), displaying a strong preference for the (R,S) stereoisomer. Catalyzes bisallylic hydroxylation and omega-1 hydroxylation of PUFA. May also participate in eicosanoids metabolism by converting hydroperoxide species into oxo metabolites (lipoxygenase-like reaction, NADPH-independent). Plays a role in the oxidative metabolism of xenobiotics. Catalyzes the N-hydroxylation of heterocyclic amines and the O-deethylation of phenacetin. Metabolizes caffeine via N3-demethylation. The sequence is that of Cytochrome P450 1A2 (CYP1A2) from Canis lupus familiaris (Dog).